A 318-amino-acid polypeptide reads, in one-letter code: Elongator complex protein 5 (318 aa).

At S270 the chain carries Phosphoserine.

This sequence belongs to the ELP5 family. As to quaternary structure, component of the elongator complex which consists of ELP1, ELP2, ELP3, ELP4, ELP5 and ELP6; in the complex, is required for optimal binding of ELP3 to ELP4. Tyrosine-phosphorylated.

It localises to the nucleus. It is found in the cytoplasm. Its pathway is tRNA modification; 5-methoxycarbonylmethyl-2-thiouridine-tRNA biosynthesis. Its function is as follows. Component of the elongator complex which is required for multiple tRNA modifications, including mcm5U (5-methoxycarbonylmethyl uridine), mcm5s2U (5-methoxycarbonylmethyl-2-thiouridine), and ncm5U (5-carbamoylmethyl uridine). The elongator complex catalyzes the formation of carboxymethyluridine in the wobble base at position 34 in tRNAs. Involved in cell migration. This chain is Elongator complex protein 5 (Elp5), found in Rattus norvegicus (Rat).